Reading from the N-terminus, the 151-residue chain is Small ribosomal subunit protein uS11A (151 aa).

A disordered region spans residues 131–151 (DVTPIPSDSTRRKGGRRGRRL). The segment covering 142 to 151 (RKGGRRGRRL) has biased composition (basic residues).

It belongs to the universal ribosomal protein uS11 family.

The sequence is that of Small ribosomal subunit protein uS11A from Drosophila melanogaster (Fruit fly).